The primary structure comprises 260 residues: Hydroxyethylthiazole kinase 1 (260 aa).

Met39 contributes to the substrate binding site. 2 residues coordinate ATP: Arg115 and Thr160. A substrate-binding site is contributed by Gly187.

This sequence belongs to the Thz kinase family. Mg(2+) is required as a cofactor.

The enzyme catalyses 5-(2-hydroxyethyl)-4-methylthiazole + ATP = 4-methyl-5-(2-phosphooxyethyl)-thiazole + ADP + H(+). It functions in the pathway cofactor biosynthesis; thiamine diphosphate biosynthesis; 4-methyl-5-(2-phosphoethyl)-thiazole from 5-(2-hydroxyethyl)-4-methylthiazole: step 1/1. Its function is as follows. Catalyzes the phosphorylation of the hydroxyl group of 4-methyl-5-beta-hydroxyethylthiazole (THZ). The chain is Hydroxyethylthiazole kinase 1 from Streptococcus pneumoniae serotype 2 (strain D39 / NCTC 7466).